Here is a 348-residue protein sequence, read N- to C-terminus: Selenide, water dikinase (348 aa).

Cysteine 17 is a catalytic residue. Residues lysine 20 and 48–50 (TRD) contribute to the ATP site. Aspartate 51 contacts Mg(2+). ATP is bound by residues aspartate 68, aspartate 91, and 139-141 (GHS). Aspartate 91 is a Mg(2+) binding site. Residue aspartate 227 coordinates Mg(2+).

This sequence belongs to the selenophosphate synthase 1 family. Class I subfamily. Homodimer. The cofactor is Mg(2+).

The enzyme catalyses hydrogenselenide + ATP + H2O = selenophosphate + AMP + phosphate + 2 H(+). Its function is as follows. Synthesizes selenophosphate from selenide and ATP. The polypeptide is Selenide, water dikinase (Yersinia pestis).